The sequence spans 274 residues: Long chain fatty acid elongase 5 (274 aa).

Over Met-1 to Glu-23 the chain is Extracellular. The chain crosses the membrane as a helical span at residues Gly-24 to Met-44. Residues Lys-45 to Gly-61 are Cytoplasmic-facing. The helical transmembrane segment at Ile-62–Ile-82 threads the bilayer. The Extracellular segment spans residues Arg-83–Tyr-105. Residues Trp-106 to Leu-126 form a helical membrane-spanning segment. The Cytoplasmic portion of the chain corresponds to Arg-127 to Arg-129. A helical membrane pass occupies residues Pro-130–Tyr-150. Residues His-151 to His-156 are Extracellular-facing. A helical membrane pass occupies residues Met-157–Leu-177. Topologically, residues Lys-178–Ser-187 are cytoplasmic. A helical membrane pass occupies residues Val-188–Val-208. The Extracellular segment spans residues His-209–Arg-227. The chain crosses the membrane as a helical span at residues Gly-228–Lys-248. Topologically, residues Glu-249–Asn-274 are cytoplasmic.

This sequence belongs to the ELO family. In terms of tissue distribution, expressed in the gut and unidentified head cells.

Its subcellular location is the membrane. It carries out the reaction 11-methyldodecanoyl-CoA + malonyl-CoA + H(+) = 3-oxoisopentadecanoyl-CoA + CO2 + CoA. The enzyme catalyses isopentadecanoyl-CoA + malonyl-CoA + H(+) = 3-oxoisoheptadecanoyl-CoA + CO2 + CoA. It functions in the pathway lipid metabolism; fatty acid biosynthesis. Functionally, catalyzes the first and rate-limiting reaction of the four reactions that constitute the long-chain fatty acids elongation cycle. Uses malonyl-CoA to add 2 carbons per cycle to the chain of long-chain fatty acids. Condensing enzyme required for the formation of isopentadecanoate (C15iso) and isoheptadecanoate (C17iso), both play critical roles in animal development and growth. This chain is Long chain fatty acid elongase 5, found in Caenorhabditis elegans.